The following is a 90-amino-acid chain: uncharacterized protein (90 aa).

The first 20 residues, 1-20 (MEKLFVLVFALALLAFSSDA), serve as a signal peptide directing secretion.

It is found in the secreted. This is an uncharacterized protein from Mus musculus (Mouse).